The following is a 363-amino-acid chain: Dihydroorotate dehydrogenase (quinone) (363 aa).

Residues 62–66 and threonine 86 contribute to the FMN site; that span reads AGYDK. Lysine 66 provides a ligand contact to substrate. 111-115 lines the substrate pocket; sequence NRLGF. 2 residues coordinate FMN: asparagine 139 and asparagine 170. Residue asparagine 170 coordinates substrate. The active-site Nucleophile is the serine 173. Asparagine 175 lines the substrate pocket. Positions 215 and 243 each coordinate FMN. Position 244–245 (244–245) interacts with substrate; sequence NT. Residues glycine 266, glycine 295, and 316 to 317 each bind FMN; that span reads YS.

Belongs to the dihydroorotate dehydrogenase family. Type 2 subfamily. In terms of assembly, monomer. It depends on FMN as a cofactor.

Its subcellular location is the cell membrane. It carries out the reaction (S)-dihydroorotate + a quinone = orotate + a quinol. The protein operates within pyrimidine metabolism; UMP biosynthesis via de novo pathway; orotate from (S)-dihydroorotate (quinone route): step 1/1. Catalyzes the conversion of dihydroorotate to orotate with quinone as electron acceptor. The sequence is that of Dihydroorotate dehydrogenase (quinone) from Agrobacterium fabrum (strain C58 / ATCC 33970) (Agrobacterium tumefaciens (strain C58)).